Reading from the N-terminus, the 186-residue chain is Peptidyl-tRNA hydrolase (186 aa).

Tyrosine 14 contacts tRNA. The active-site Proton acceptor is histidine 19. 3 residues coordinate tRNA: tyrosine 64, asparagine 66, and asparagine 112.

The protein belongs to the PTH family. Monomer.

Its subcellular location is the cytoplasm. It catalyses the reaction an N-acyl-L-alpha-aminoacyl-tRNA + H2O = an N-acyl-L-amino acid + a tRNA + H(+). Hydrolyzes ribosome-free peptidyl-tRNAs (with 1 or more amino acids incorporated), which drop off the ribosome during protein synthesis, or as a result of ribosome stalling. Functionally, catalyzes the release of premature peptidyl moieties from peptidyl-tRNA molecules trapped in stalled 50S ribosomal subunits, and thus maintains levels of free tRNAs and 50S ribosomes. The polypeptide is Peptidyl-tRNA hydrolase (Geobacillus kaustophilus (strain HTA426)).